The primary structure comprises 344 residues: uncharacterized protein (344 aa).

Residues Ile221–Asn249 are a coiled coil.

This sequence belongs to the IIV-6 287R family.

This is an uncharacterized protein from Aedes vexans (Inland floodwater mosquito).